A 394-amino-acid polypeptide reads, in one-letter code: Elongation factor Tu (394 aa).

A tr-type G domain is found at 10-204; sequence KPHVNVGTIG…ALDSYIPEPE (195 aa). The G1 stretch occupies residues 19–26; sequence GHVDHGKT. 19 to 26 lines the GTP pocket; that stretch reads GHVDHGKT. Position 26 (T26) interacts with Mg(2+). Residues 60–64 are G2; the sequence is GITIS. Residues 81–84 are G3; that stretch reads DCPG. GTP is bound by residues 81 to 85 and 136 to 139; these read DCPGH and NKCD. The interval 136–139 is G4; it reads NKCD. Positions 174–176 are G5; that stretch reads SAL.

Belongs to the TRAFAC class translation factor GTPase superfamily. Classic translation factor GTPase family. EF-Tu/EF-1A subfamily. In terms of assembly, monomer.

It localises to the cytoplasm. The enzyme catalyses GTP + H2O = GDP + phosphate + H(+). Its function is as follows. GTP hydrolase that promotes the GTP-dependent binding of aminoacyl-tRNA to the A-site of ribosomes during protein biosynthesis. The protein is Elongation factor Tu of Pseudoalteromonas atlantica (strain T6c / ATCC BAA-1087).